Here is a 315-residue protein sequence, read N- to C-terminus: tRNA dimethylallyltransferase (315 aa).

14 to 21 (GPTASGKT) is a binding site for ATP. A substrate-binding site is contributed by 16–21 (TASGKT). Interaction with substrate tRNA stretches follow at residues 39 to 42 (DSAL), 163 to 167 (QRIQR), and 248 to 253 (RCVGYR).

The protein belongs to the IPP transferase family. In terms of assembly, monomer. The cofactor is Mg(2+).

It carries out the reaction adenosine(37) in tRNA + dimethylallyl diphosphate = N(6)-dimethylallyladenosine(37) in tRNA + diphosphate. Functionally, catalyzes the transfer of a dimethylallyl group onto the adenine at position 37 in tRNAs that read codons beginning with uridine, leading to the formation of N6-(dimethylallyl)adenosine (i(6)A). This is tRNA dimethylallyltransferase from Paraburkholderia xenovorans (strain LB400).